The sequence spans 860 residues: Leucine--tRNA ligase (860 aa).

The 'HIGH' region motif lies at 42-52; the sequence is PYPSGRLHMGH. Residues 619–623 carry the 'KMSKS' region motif; the sequence is KMSKS. An ATP-binding site is contributed by Lys622.

The protein belongs to the class-I aminoacyl-tRNA synthetase family.

The protein localises to the cytoplasm. The catalysed reaction is tRNA(Leu) + L-leucine + ATP = L-leucyl-tRNA(Leu) + AMP + diphosphate. This is Leucine--tRNA ligase from Mannheimia succiniciproducens (strain KCTC 0769BP / MBEL55E).